The primary structure comprises 279 residues: Probable ribosomal RNA small subunit methyltransferase A (279 aa).

6 residues coordinate S-adenosyl-L-methionine: Asn-23, Leu-25, Gly-50, Glu-71, Asp-95, and Asn-110.

It belongs to the class I-like SAM-binding methyltransferase superfamily. rRNA adenine N(6)-methyltransferase family. RsmA subfamily.

It localises to the cytoplasm. Its function is as follows. Specifically dimethylates two adjacent adenosines in the loop of a conserved hairpin near the 3'-end of 16S rRNA in the 30S particle. May play a critical role in biogenesis of 30S subunits. In Thermococcus kodakarensis (strain ATCC BAA-918 / JCM 12380 / KOD1) (Pyrococcus kodakaraensis (strain KOD1)), this protein is Probable ribosomal RNA small subunit methyltransferase A.